Consider the following 104-residue polypeptide: Cytochrome c-552 (104 aa).

An N-terminal signal peptide occupies residues 1-23; sequence MHLHLRGICLVLAVASSSSSALA. Residues cysteine 37, cysteine 40, histidine 41, and methionine 82 each coordinate heme c.

This sequence belongs to the cytochrome c family. As to quaternary structure, monoheme monomer. Has the tendency to dimerize. Binds 1 heme c group covalently per subunit.

It is found in the periplasm. The protein is Cytochrome c-552 (cycB) of Bradyrhizobium diazoefficiens (strain JCM 10833 / BCRC 13528 / IAM 13628 / NBRC 14792 / USDA 110).